The chain runs to 641 residues: Chaperone protein DnaK (641 aa).

T200 bears the Phosphothreonine; by autocatalysis mark. Positions A602–S611 are enriched in low complexity. Residues A602–A641 form a disordered region. Over residues E630–A641 the composition is skewed to basic and acidic residues.

Belongs to the heat shock protein 70 family.

In terms of biological role, acts as a chaperone. This chain is Chaperone protein DnaK, found in Methylacidiphilum infernorum (isolate V4) (Methylokorus infernorum (strain V4)).